A 3799-amino-acid chain; its full sequence is Polyketide synthase GfsE (3799 aa).

A Ketosynthase family 3 (KS3) 1 domain is found at 33-459 (HEPIAIIGMS…GTNAHAILEE (427 aa)). Module stretches follow at residues 33–1730 (HEPI…RSSA) and 1749–3494 (DEAI…RTDL). Catalysis depends on for beta-ketoacyl synthase 1 activity residues cysteine 206, histidine 341, and histidine 381. The disordered stretch occupies residues 462–496 (AATGNPTEADTDQEPAASASPDRTTTLPAVPWPLS). The Malonyl-CoA:ACP transacylase (MAT) 1 domain maps to 582–895 (FVFPGQGSQW…LGEAHAHGAD (314 aa)). The segment at 944–1069 (HPLFGAVVEV…GVLELEARPE (126 aa)) is N-terminal hotdog fold 1. The PKS/mFAS DH 1 domain occupies 944-1222 (HPLFGAVVEV…SRPVAEEQLG (279 aa)). Histidine 976 serves as the catalytic Proton acceptor; for dehydratase activity 1. The tract at residues 1081-1222 (AEVVPVEGLY…SRPVAEEQLG (142 aa)) is C-terminal hotdog fold 1. The active-site Proton donor; for dehydratase activity 1 is the aspartate 1142. A Ketoreductase (KR) 1 domain is found at 1382–1554 (LLVTGASGVL…TSLSWGLWAE (173 aa)). One can recognise a Carrier 1 domain in the interval 1652–1730 (EAERAVLELV…ALATHIRSSA (79 aa)). At serine 1690 the chain carries O-(pantetheine 4'-phosphoryl)serine. One can recognise a Ketosynthase family 3 (KS3) 2 domain in the interval 1749–2174 (DEAIAIVGMA…GTNAHVILEQ (426 aa)). Catalysis depends on for beta-ketoacyl synthase 2 activity residues cysteine 1921, histidine 2056, and histidine 2096. One can recognise a Malonyl-CoA:ACP transacylase (MAT) 2 domain in the interval 2284 to 2604 (FVFPGQGSQW…VSLAKVHTHG (321 aa)). The interval 2656–2781 (HPLLTGVVDL…GTLAVDADHD (126 aa)) is N-terminal hotdog fold 2. One can recognise a PKS/mFAS DH 2 domain in the interval 2656-2936 (HPLLTGVVDL…TRPVTAAQFA (281 aa)). Histidine 2688 serves as the catalytic Proton acceptor; for dehydratase activity 2. The C-terminal hotdog fold 2 stretch occupies residues 2794 to 2936 (ADPVDLTEVY…TRPVTAAQFA (143 aa)). Aspartate 2855 (proton donor; for dehydratase activity 2) is an active-site residue. The 173-residue stretch at 3142 to 3314 (LLVTGASGVL…TALSWGLWAE (173 aa)) folds into the Ketoreductase (KR) 2 domain. The Carrier 2 domain occupies 3419–3494 (AALLDLVGAQ…ALAAQLRTDL (76 aa)). An O-(pantetheine 4'-phosphoryl)serine modification is found at serine 3454.

It depends on pantetheine 4'-phosphate as a cofactor.

It participates in antibiotic biosynthesis. Its function is as follows. Fifth protein in the synthesis of the 16-membered macrolide antibiotics FD-891 and FD-892. Composed of 2 modules. Modifies the product of GfsD by multiple rounds of addition of methylmalonyl-CoA and other modifications to help generate the final products. The protein is Polyketide synthase GfsE of Streptomyces halstedii.